A 492-amino-acid chain; its full sequence is Gamma-aminobutyric acid receptor subunit alpha-3 (492 aa).

Positions 1-28 (MIITQMSQFYMAGLGLLFLINILPGTTG) are cleaved as a signal peptide. The Extracellular portion of the chain corresponds to 29–274 (QVESRRQEPG…MTTHFHLKRK (246 aa)). The N-linked (GlcNAc...) asparagine glycan is linked to Asn-63. 4-aminobutanoate is bound at residue Arg-119. 2 N-linked (GlcNAc...) asparagine glycosylation sites follow: Asn-163 and Asn-176. A 4-aminobutanoate-binding site is contributed by Thr-182. A disulfide bond links Cys-191 and Cys-205. An N-linked (GlcNAc...) asparagine glycan is attached at Asn-228. Residues 275-295 (IGYFVIQTYLPCIMTVILSQV) traverse the membrane as a helical segment. At 296-305 (SFWLNRESVP) the chain is on the cytoplasmic side. Residues 306–325 (ARTVFGVTTVLTMTTLSISA) traverse the membrane as a helical segment. Over 326–336 (RNSLPKVAYAT) the chain is Extracellular. The helical transmembrane segment at 337 to 357 (AMDWFMAVCYAFVFSALIEFA) threads the bilayer. The Cytoplasmic portion of the chain corresponds to 358–457 (TVNYFTKRSW…TYNSVSKVDK (100 aa)). The residue at position 426 (Ser-426) is a Phosphoserine. Residue Thr-427 is modified to Phosphothreonine. Ser-433 carries the post-translational modification Phosphoserine. The helical transmembrane segment at 458-478 (ISRIIFPVLFAIFNLVYWATY) threads the bilayer. Residues 479–492 (VNRESAIKGMIRKQ) lie on the Extracellular side of the membrane.

This sequence belongs to the ligand-gated ion channel (TC 1.A.9) family. Gamma-aminobutyric acid receptor (TC 1.A.9.5) subfamily. GABRA3 sub-subfamily. As to quaternary structure, heteropentamer, formed by a combination of alpha (GABRA1-6), beta (GABRB1-3), gamma (GABRG1-3), delta (GABRD), epsilon (GABRE), rho (GABRR1-3), pi (GABRP) and theta (GABRQ) chains, each subunit exhibiting distinct physiological and pharmacological properties. Binds UBQLN1. Interacts with GPHN.

The protein localises to the postsynaptic cell membrane. It is found in the cell membrane. The enzyme catalyses chloride(in) = chloride(out). In terms of biological role, alpha subunit of the heteropentameric ligand-gated chloride channel gated by gamma-aminobutyric acid (GABA), a major inhibitory neurotransmitter in the brain. GABA-gated chloride channels, also named GABA(A) receptors (GABAAR), consist of five subunits arranged around a central pore and contain GABA active binding site(s) located at the alpha and beta subunit interface(s). When activated by GABA, GABAARs selectively allow the flow of chloride anions across the cell membrane down their electrochemical gradient. Chloride influx into the postsynaptic neuron following GABAAR opening decreases the neuron ability to generate a new action potential, thereby reducing nerve transmission. This is Gamma-aminobutyric acid receptor subunit alpha-3 (GABRA3) from Bos taurus (Bovine).